The chain runs to 303 residues: Large ribosomal subunit protein uL18 (303 aa).

Belongs to the universal ribosomal protein uL18 family. In terms of assembly, component of the large ribosomal subunit (LSU).

It is found in the cytoplasm. The protein localises to the nucleus. In terms of biological role, component of the ribosome, a large ribonucleoprotein complex responsible for the synthesis of proteins in the cell. The small ribosomal subunit (SSU) binds messenger RNAs (mRNAs) and translates the encoded message by selecting cognate aminoacyl-transfer RNA (tRNA) molecules. The large subunit (LSU) contains the ribosomal catalytic site termed the peptidyl transferase center (PTC), which catalyzes the formation of peptide bonds, thereby polymerizing the amino acids delivered by tRNAs into a polypeptide chain. The nascent polypeptides leave the ribosome through a tunnel in the LSU and interact with protein factors that function in enzymatic processing, targeting, and the membrane insertion of nascent chains at the exit of the ribosomal tunnel. This Oikopleura dioica (Tunicate) protein is Large ribosomal subunit protein uL18 (RPL5).